The sequence spans 571 residues: Translation initiation factor IF-2 (571 aa).

Residues 71-239 (RRPPVVVIMG…ILLLAELEDY (169 aa)) form the tr-type G domain. The interval 80–87 (GHVDHGKT) is G1. Position 80-87 (80-87 (GHVDHGKT)) interacts with GTP. The tract at residues 105–109 (GITQH) is G2. The interval 126–129 (DTPG) is G3. GTP is bound by residues 126-130 (DTPGH) and 180-183 (NKID). The interval 180-183 (NKID) is G4. The interval 216 to 218 (SAK) is G5.

The protein belongs to the TRAFAC class translation factor GTPase superfamily. Classic translation factor GTPase family. IF-2 subfamily.

Its subcellular location is the cytoplasm. In terms of biological role, one of the essential components for the initiation of protein synthesis. Protects formylmethionyl-tRNA from spontaneous hydrolysis and promotes its binding to the 30S ribosomal subunits. Also involved in the hydrolysis of GTP during the formation of the 70S ribosomal complex. The chain is Translation initiation factor IF-2 from Thermus thermophilus (strain ATCC BAA-163 / DSM 7039 / HB27).